A 248-amino-acid polypeptide reads, in one-letter code: Ubiquinone biosynthesis O-methyltransferase (248 aa).

S-adenosyl-L-methionine-binding residues include R41, G72, D93, and M136.

This sequence belongs to the methyltransferase superfamily. UbiG/COQ3 family.

The catalysed reaction is a 3-demethylubiquinol + S-adenosyl-L-methionine = a ubiquinol + S-adenosyl-L-homocysteine + H(+). The enzyme catalyses a 3-(all-trans-polyprenyl)benzene-1,2-diol + S-adenosyl-L-methionine = a 2-methoxy-6-(all-trans-polyprenyl)phenol + S-adenosyl-L-homocysteine + H(+). Its pathway is cofactor biosynthesis; ubiquinone biosynthesis. Functionally, O-methyltransferase that catalyzes the 2 O-methylation steps in the ubiquinone biosynthetic pathway. In Brucella abortus (strain 2308), this protein is Ubiquinone biosynthesis O-methyltransferase.